The sequence spans 183 residues: Ras-related protein Rap-2a (183 aa).

10-17 (GSGGVGKS) contributes to the GTP binding site. An Effector region motif is present at residues 32-40 (YDPTIEDFY). Residues 57 to 61 (DTAGT) and 116 to 119 (NKVD) contribute to the GTP site. S-palmitoyl cysteine attachment occurs at residues cysteine 176 and cysteine 177. Cysteine 180 bears the Cysteine methyl ester mark. Cysteine 180 carries S-farnesyl cysteine lipidation. Positions 181-183 (NIQ) are cleaved as a propeptide — removed in mature form.

It belongs to the small GTPase superfamily. Ras family. Interacts with PLCE1. Interacts with ARHGAP29, SGSM1, SGSM2 and SGSM3. Interacts (GTP-bound form preferentially) with MAP4K4. Interacts with MINK1. Interacts with cytoskeletal actin. Interacts (GTP-bound form) with RUNDC3A. Interacts (GTP-bound form preferentially) with TNIK (via the CNH domain); the interaction is direct and recruits RAP2A to the E3 ubiquitin ligase NEDD4. Interacts with RGS14; the interaction is GTP-dependent. In terms of processing, ubiquitinated; undergoes 'Lys-63' monoubiquitination and diubiquitination by NEDD4. Multiple lysine residues are probably modified. Ubiquitination requires TNIK, prevents interaction with effectors and inactivates RAP2A. Ubiquitination by the ECS(RAB40B) complex leads to RAP2A localization to lamellipodia plasma membrane, activation, and regulation of sorting at early endosomes for recycling to the lamellipodia plasma membrane. Palmitoylated. Palmitoylation is required for association with recycling endosome membranes and activation of TNIK. Expressed in granular layer of the cerebellum, forebrain, striatum, layer V of the cortex, olfactory cortex, tubercules, subthalamic and hippocampus, particularly in the CA2 region, to a lesser extent in the CA1 region and the external layer of the dentate gyrus. Expressed in neurons.

The protein localises to the midbody. Its subcellular location is the cell projection. It localises to the lamellipodium membrane. It is found in the golgi apparatus. The protein resides in the recycling endosome membrane. The protein localises to the lysosome. It carries out the reaction GTP + H2O = GDP + phosphate + H(+). With respect to regulation, activated by the guanine nucleotide-exchange factors RAPGEF3 and RAPGEF4 in a cAMP-dependent manner. Nucleotide exchange is also specifically stimulated by RAPGEF5, RASGEF1A and RASGEF1B. In terms of biological role, small GTP-binding protein which cycles between a GDP-bound inactive and a GTP-bound active form. In its active form interacts with and regulates several effectors including MAP4K4, MINK1 and TNIK. Part of a signaling complex composed of NEDD4, RAP2A and TNIK which regulates neuronal dendrite extension and arborization during development. More generally, it is part of several signaling cascades and may regulate cytoskeletal rearrangements, cell migration, cell adhesion and cell spreading. In Mus musculus (Mouse), this protein is Ras-related protein Rap-2a.